Consider the following 232-residue polypeptide: Phosphatidylserine decarboxylase proenzyme (232 aa).

The Schiff-base intermediate with substrate; via pyruvic acid role is filled by serine 190. The residue at position 190 (serine 190) is a Pyruvic acid (Ser); by autocatalysis.

Belongs to the phosphatidylserine decarboxylase family. PSD-A subfamily. Heterodimer of a large membrane-associated beta subunit and a small pyruvoyl-containing alpha subunit. Requires pyruvate as cofactor. Is synthesized initially as an inactive proenzyme. Formation of the active enzyme involves a self-maturation process in which the active site pyruvoyl group is generated from an internal serine residue via an autocatalytic post-translational modification. Two non-identical subunits are generated from the proenzyme in this reaction, and the pyruvate is formed at the N-terminus of the alpha chain, which is derived from the carboxyl end of the proenzyme. The post-translation cleavage follows an unusual pathway, termed non-hydrolytic serinolysis, in which the side chain hydroxyl group of the serine supplies its oxygen atom to form the C-terminus of the beta chain, while the remainder of the serine residue undergoes an oxidative deamination to produce ammonia and the pyruvoyl prosthetic group on the alpha chain.

It localises to the cell membrane. It carries out the reaction a 1,2-diacyl-sn-glycero-3-phospho-L-serine + H(+) = a 1,2-diacyl-sn-glycero-3-phosphoethanolamine + CO2. Its pathway is phospholipid metabolism; phosphatidylethanolamine biosynthesis; phosphatidylethanolamine from CDP-diacylglycerol: step 2/2. In terms of biological role, catalyzes the formation of phosphatidylethanolamine (PtdEtn) from phosphatidylserine (PtdSer). The chain is Phosphatidylserine decarboxylase proenzyme from Beijerinckia indica subsp. indica (strain ATCC 9039 / DSM 1715 / NCIMB 8712).